The chain runs to 780 residues: Dynamin-related protein 3B (780 aa).

Ser2 is subject to N-acetylserine. Positions 40 to 315 constitute a Dynamin-type G domain; sequence TIALPQVAVV…LVQHIKALLP (276 aa). A G1 motif region spans residues 50–57; the sequence is GSQSSGKS. Residue 50 to 57 coordinates GTP; it reads GSQSSGKS. The tract at residues 76–78 is G2 motif; the sequence is CTR. Residues 157–160 form a G3 motif region; it reads DLPG. GTP contacts are provided by residues 157–161 and 226–229; these read DLPGI and TKLD. A G4 motif region spans residues 226 to 229; it reads TKLD. The segment at 256–259 is G5 motif; sequence VNRS. Disordered regions lie at residues 536-558 and 573-592; these read PVAR…QIKT and QAVP…STSW. A compositionally biased stretch (basic and acidic residues) spans 539-548; the sequence is RPRDTVEPER. The segment covering 549–558 has biased composition (polar residues); that stretch reads TASSGSQIKT. A GED domain is found at 654–745; the sequence is IEITKLLLKS…TLDELPLEAE (92 aa). A compositionally biased stretch (basic and acidic residues) spans 753 to 770; the sequence is IGSEAKHEELPGTRRSRT. The tract at residues 753 to 780 is disordered; sequence IGSEAKHEELPGTRRSRTETNGNGRLHM. Polar residues predominate over residues 771 to 780; that stretch reads ETNGNGRLHM.

Belongs to the TRAFAC class dynamin-like GTPase superfamily. Dynamin/Fzo/YdjA family. In terms of assembly, interacts with ARC5 on peroxisomes and ELM1 on mitochondria.

The protein localises to the mitochondrion. It localises to the peroxisome. Its function is as follows. Involved in the control of mitochondrial and peroxisomal division and morphology. The protein is Dynamin-related protein 3B (DRP3B) of Arabidopsis thaliana (Mouse-ear cress).